The following is a 345-amino-acid chain: Platelet-derived growth factor C (345 aa).

Residues 1–22 (MLLFGFLLLTFALVSQRQGAEA) form the signal peptide. Residues asparagine 25 and asparagine 55 are each glycosylated (N-linked (GlcNAc...) asparagine). The region spanning 46–163 (HEKIITVSAN…PGFCIHYTLL (118 aa)) is the CUB domain. Cystine bridges form between cysteine 104/cysteine 124, cysteine 250/cysteine 294, cysteine 280/cysteine 335, and cysteine 287/cysteine 337.

The protein belongs to the PDGF/VEGF growth factor family. In terms of assembly, homodimer; disulfide-linked. Interacts with PDGFRA homodimers, and with heterodimers formed by PDGFRA and PDGFRB. In terms of processing, proteolytic removal of the N-terminal CUB domain releasing the core domain is necessary for unmasking the receptor-binding epitopes of the core domain. Cleavage after basic residues in the hinge region (region connecting the CUB and growth factor domains) gives rise to the receptor-binding form.

It is found in the secreted. Growth factor that plays an essential role in the regulation of embryonic development, cell proliferation, cell migration, survival and chemotaxis. Potent mitogen and chemoattractant for cells of mesenchymal origin. Required for normal skeleton formation during embryonic development. Required for normal skin morphogenesis during embryonic development. Plays an important role in wound healing, in angiogenesis and blood vessel development. This Gekko japonicus (Schlegel's Japanese gecko) protein is Platelet-derived growth factor C (PDGFC).